The primary structure comprises 1074 residues: BRD4-interacting chromatin-remodeling complex-associated protein-like (1074 aa).

Disordered stretches follow at residues 542–603 (AVSS…NTPG), 620–689 (TSPI…GQKR), 834–874 (TPLD…HDQF), and 887–952 (GNIS…SKLP). Polar residues-rich tracts occupy residues 544-576 (SSASTAHPTLGPTVQSGAPGSNFTGDQLTQANR), 591-603 (ASKSPSTLSNTPG), 620-629 (TSPIPTSKTT), and 660-680 (GATQAQPESSVGSSPSQTAVQ). Phosphoserine is present on Ser621. Basic and acidic residues-rich tracts occupy residues 889 to 904 (ISKKSEGHSRTLKFDR), 913 to 925 (PPEDKGGRRDPAK), and 934 to 948 (EGHRKSLPRPDHGSE). The residue at position 976 (Ser976) is a Phosphoserine.

Component of the multiprotein chromatin-remodeling complexes SWI/SNF: SWI/SNF-A (BAF), SWI/SNF-B (PBAF) and related complexes. The canonical complex contains a catalytic subunit (either SMARCA4/BRG1/BAF190A or SMARCA2/BRM/BAF190B) and at least SMARCE1, ACTL6A/BAF53, SMARCC1/BAF155, SMARCC2/BAF170, and SMARCB1/SNF5/BAF47. Other subunits specific to each of the complexes may also be present permitting several possible combinations developmentally and tissue specific. Component of the SWI/SNF (GBAF) subcomplex, which includes at least BICRA or BICRAL (mutually exclusive), BRD9, SS18, the core BAF subunits, SMARCA2/BRM, SMARCA4/BRG1/BAF190A, ACTL6A/BAF53, SMARCC1/BAF155, and SMARCD1/BAF60A.

Its function is as follows. Component of SWI/SNF chromatin remodeling subcomplex GBAF that carries out key enzymatic activities, changing chromatin structure by altering DNA-histone contacts within a nucleosome in an ATP-dependent manner. This Mus musculus (Mouse) protein is BRD4-interacting chromatin-remodeling complex-associated protein-like.